The primary structure comprises 243 residues: 6-carboxyhexanoate--CoA ligase (243 aa).

It belongs to the BioW family. Homodimer. Requires Mg(2+) as cofactor.

It carries out the reaction heptanedioate + ATP + CoA = 6-carboxyhexanoyl-CoA + AMP + diphosphate. It functions in the pathway metabolic intermediate metabolism; pimeloyl-CoA biosynthesis; pimeloyl-CoA from pimelate: step 1/1. Its function is as follows. Catalyzes the transformation of pimelate into pimeloyl-CoA with concomitant hydrolysis of ATP to AMP. In Corynebacterium pseudotuberculosis (strain FRC41), this protein is 6-carboxyhexanoate--CoA ligase.